Consider the following 456-residue polypeptide: Probable galactarate/D-glucarate transporter GudP (456 aa).

10 helical membrane passes run tyrosine 11–isoleucine 31, tyrosine 51–leucine 71, lysine 78–tyrosine 96, isoleucine 102–alanine 119, isoleucine 246–valine 266, glycine 280–isoleucine 300, threonine 317–alanine 337, valine 341–valine 361, phenylalanine 381–glycine 401, and serine 408–isoleucine 428.

It belongs to the major facilitator superfamily. Phthalate permease family.

The protein resides in the cell inner membrane. It catalyses the reaction galactarate(in) + H(+)(in) = galactarate(out) + H(+)(out). The catalysed reaction is D-glucarate(in) + H(+)(in) = D-glucarate(out) + H(+)(out). In terms of biological role, probably involved in the uptake of galactarate and/or D-glucarate. The chain is Probable galactarate/D-glucarate transporter GudP (gudP) from Pseudomonas putida (Arthrobacter siderocapsulatus).